Consider the following 415-residue polypeptide: tRNA(Met) cytidine acetate ligase (415 aa).

Residues 7–20 (IVEY…HLYH), Gly102, Asn165, and 190–191 (RI) contribute to the ATP site.

Belongs to the TmcAL family.

It localises to the cytoplasm. It carries out the reaction cytidine(34) in elongator tRNA(Met) + acetate + ATP = N(4)-acetylcytidine(34) in elongator tRNA(Met) + AMP + diphosphate. Catalyzes the formation of N(4)-acetylcytidine (ac(4)C) at the wobble position of elongator tRNA(Met), using acetate and ATP as substrates. First activates an acetate ion to form acetyladenylate (Ac-AMP) and then transfers the acetyl group to tRNA to form ac(4)C34. This Acetivibrio thermocellus (strain ATCC 27405 / DSM 1237 / JCM 9322 / NBRC 103400 / NCIMB 10682 / NRRL B-4536 / VPI 7372) (Clostridium thermocellum) protein is tRNA(Met) cytidine acetate ligase.